The following is a 1105-amino-acid chain: Protein phosphatase 1 regulatory subunit 26 (1105 aa).

Disordered regions lie at residues 228–382 (LNDK…NKLA), 444–468 (QSTY…DSLV), 504–526 (TSPE…AKAM), and 589–748 (LNRG…DSDD). Residues 275-285 (LLRKHASDSKL) are compositionally biased toward basic and acidic residues. Positions 306–317 (TKTSSPSPKSTP) are enriched in low complexity. Residues 359-368 (SPTSANSLTH) are compositionally biased toward polar residues. A compositionally biased stretch (pro residues) spans 451–460 (TEPPPPPPEP). Positions 504–516 (TSPELGSQSSKLS) are enriched in polar residues. The span at 602 to 612 (SYSSGDKSSSL) shows a compositional bias: low complexity. A compositionally biased stretch (basic residues) spans 628–647 (SKRKYKKRPKDGKSQCKKRV). The span at 686 to 701 (NSLEKSKKRREEKAVE) shows a compositional bias: basic and acidic residues. Residues 705–715 (PSCSSSPQGNK) show a composition bias toward polar residues. The span at 733-742 (RALDDAHESS) shows a compositional bias: basic and acidic residues.

Its subcellular location is the nucleus. It is found in the nucleolus. Functionally, may inhibit phosphatase activity of protein phosphatase 1 (PP1) complexes. May positively regulate cell proliferation. The chain is Protein phosphatase 1 regulatory subunit 26 (ppp1r26) from Xenopus laevis (African clawed frog).